The chain runs to 202 residues: Ribosome biogenesis regulatory protein homolog (202 aa).

The segment at 82–103 (TLPPPTTPLPREKPVPQPKPET) is disordered.

The protein belongs to the RRS1 family. Component of a hexameric 5S RNP precursor complex, composed of 5S RNA, RRS1, RPF2, RPL5, RPL11 and SYO1; this complex acts as a precursor for ribosome assembly.

Its subcellular location is the nucleus. Functionally, involved in ribosomal large subunit assembly. The chain is Ribosome biogenesis regulatory protein homolog from Chaetomium thermophilum (strain DSM 1495 / CBS 144.50 / IMI 039719) (Thermochaetoides thermophila).